We begin with the raw amino-acid sequence, 410 residues long: MGICLSAQVKAESSGASTKYDAKDIGSLGSKASSVSVRPSPRTEGEILQSPNLKSFSFAELKSATRNFRPDSVLGEGGFGCVFKGWIDEKSLTASRPGTGLVIAVKKLNQDGWQGHQEWLAEVNYLGQFSHRHLVKLIGYCLEDEHRLLVYEFMPRGSLENHLFRRGLYFQPLSWKLRLKVALGAAKGLAFLHSSETRVIYRDFKTSNILLDSEYNAKLSDFGLAKDGPIGDKSHVSTRVMGTHGYAAPEYLATGHLTTKSDVYSFGVVLLELLSGRRAVDKNRPSGERNLVEWAKPYLVNKRKIFRVIDNRLQDQYSMEEACKVATLSLRCLTTEIKLRPNMSEVVSHLEHIQSLNAAIGGNMDKTDRRMRRRSDSVVSKKVNAGFARQTAVGSTVVAYPRPSASPLYV.

Residue Gly-2 is the site of N-myristoyl glycine attachment. Residue Cys-4 is the site of S-palmitoyl cysteine attachment. Residues 11–46 (AESSGASTKYDAKDIGSLGSKASSVSVRPSPRTEGE) are disordered. The 285-residue stretch at 68 to 352 (FRPDSVLGEG…MSEVVSHLEH (285 aa)) folds into the Protein kinase domain. Residues 74-82 (LGEGGFGCV) and Lys-106 contribute to the ATP site. A Phosphotyrosine modification is found at Tyr-151. Asp-203 functions as the Proton acceptor in the catalytic mechanism. A phosphoserine mark is found at Ser-207 and Ser-237. Phosphothreonine occurs at positions 238 and 243. Phosphotyrosine is present on Tyr-251.

This sequence belongs to the protein kinase superfamily. Ser/Thr protein kinase family. As to quaternary structure, interacts with the Xanthomonas campestris effector XopAC/AvrAC. Expressed in stomatal guard cells of leaves.

It is found in the cell membrane. The catalysed reaction is L-seryl-[protein] + ATP = O-phospho-L-seryl-[protein] + ADP + H(+). The enzyme catalyses L-threonyl-[protein] + ATP = O-phospho-L-threonyl-[protein] + ADP + H(+). Possible bi-functional kinase. In vitro, it exhibits serine/threonine activity. In vivo, can phosphorylate tyrosine residues of limited substrates. May be involved in plant defense signaling. This Arabidopsis thaliana (Mouse-ear cress) protein is Probable serine/threonine-protein kinase PBL9.